A 125-amino-acid polypeptide reads, in one-letter code: Glycine cleavage system H protein (125 aa).

The 83-residue stretch at 22–104 folds into the Lipoyl-binding domain; that stretch reads SYIIGITDFA…YDTGWILKLT (83 aa). Residue K63 is modified to N6-lipoyllysine.

Belongs to the GcvH family. As to quaternary structure, the glycine cleavage system is composed of four proteins: P, T, L and H. It depends on (R)-lipoate as a cofactor.

Its function is as follows. The glycine cleavage system catalyzes the degradation of glycine. The H protein shuttles the methylamine group of glycine from the P protein to the T protein. Functionally, is also involved in protein lipoylation via its role as an octanoyl/lipoyl carrier protein intermediate. This is Glycine cleavage system H protein from Listeria welshimeri serovar 6b (strain ATCC 35897 / DSM 20650 / CCUG 15529 / CIP 8149 / NCTC 11857 / SLCC 5334 / V8).